Reading from the N-terminus, the 285-residue chain is Putative sugar uptake protein lmo0169 (285 aa).

The next 10 helical transmembrane spans lie at isoleucine 5–glycine 24, isoleucine 31–phenylalanine 48, tyrosine 53–glycine 71, valine 84–alanine 106, leucine 116–tyrosine 135, isoleucine 151–isoleucine 173, alanine 178–isoleucine 195, tryptophan 207–serine 226, isoleucine 232–leucine 254, and leucine 263–isoleucine 282.

Belongs to the GRP transporter (TC 2.A.7.5) family.

The protein localises to the cell membrane. This is Putative sugar uptake protein lmo0169 from Listeria monocytogenes serovar 1/2a (strain ATCC BAA-679 / EGD-e).